The chain runs to 591 residues: Protein kinase C zeta type (591 aa).

The PB1 domain occupies 15–98 (RVRLKAHYSG…DGLILHVFPS (84 aa)). The segment at 79–145 (AFRLAGQHRD…KRFNRRAYCG (67 aa)) is interaction with SQSTM1. The Phorbol-ester/DAG-type zinc finger occupies 130–180 (GHLFQAKRFNRRAYCGQCSERIWGLARQGYRCINCKLLVHKRCHGLVPLTC). The 267-residue stretch at 251-517 (FDLIRVIGRG…FSDIKSHAFF (267 aa)) folds into the Protein kinase domain. ATP-binding positions include 257–265 (IGRGSYAKV) and lysine 280. The Proton acceptor role is filled by aspartate 375. Threonine 409 is subject to Phosphothreonine; by PDPK1 and PI3K. Residues 518–589 (RSIDWDLLEK…INPLLLSTEE (72 aa)) enclose the AGC-kinase C-terminal domain. A Phosphothreonine modification is found at threonine 559. The residue at position 590 (serine 590) is a Phosphoserine.

The protein belongs to the protein kinase superfamily. AGC Ser/Thr protein kinase family. PKC subfamily. As to quaternary structure, interacts with PARD6A, PARD6B and PARD6G. Part of a complex with PARD3, PARD6A or PARD6B or PARD6G and CDC42 or RAC1. Interacts with ADAP1/CENTA1. Interacts directly with SQSTM1. Forms a ternary complex with SQSTM1 and KCNAB2. Forms another ternary complex with SQSTM1 and GABRR3. Forms a complex with SQSTM1 and MAP2K5. Interacts (via the protein kinase domain) with WWC1. Forms a tripartite complex with WWC1 and DDR1, but predominantly in the absence of collagen. Component of the Par polarity complex, composed of at least phosphorylated PRKCZ, PARD3 and TIAM1. Interacts with PDPK1 (via N-terminal region). Interacts with WDFY2 (via WD repeats 1-3). Interacts with VAMP2. Forms a complex with WDFY2 and VAMP2. Interacts with APPL1. Interacts with WWC1, WWC2 and WWC3. In terms of processing, CDH5 is required for its phosphorylation at Thr-409. Phosphorylated by protein kinase PDPK1; phosphorylation is inhibited by the apoptotic C-terminal cleavage product of PKN2. Phosphorylation at Thr-409 by PI3K activates the kinase.

Its subcellular location is the cytoplasm. The protein resides in the endosome. The protein localises to the cell junction. It localises to the membrane. The enzyme catalyses L-seryl-[protein] + ATP = O-phospho-L-seryl-[protein] + ADP + H(+). It carries out the reaction L-threonyl-[protein] + ATP = O-phospho-L-threonyl-[protein] + ADP + H(+). Atypical PKCs (PRKCI and PRKCZ) exhibit an elevated basal enzymatic activity (that may be due to the interaction with SMG1 or SQSTM1) and are not regulated by diacylglycerol, phosphatidylserine, phorbol esters or calcium ions. Two specific sites, Thr-409 (activation loop of the kinase domain) and Thr-559 (turn motif), need to be phosphorylated for its full activation. Phosphatidylinositol 3,4,5-trisphosphate might be a physiological activator. Calcium- and diacylglycerol-independent serine/threonine-protein kinase that functions in phosphatidylinositol 3-kinase (PI3K) pathway and mitogen-activated protein (MAP) kinase cascade, and is involved in NF-kappa-B activation, mitogenic signaling, cell proliferation, cell polarity, inflammatory response and maintenance of long-term potentiation (LTP). Upon lipopolysaccharide (LPS) treatment in macrophages, or following mitogenic stimuli, functions downstream of PI3K to activate MAP2K1/MEK1-MAPK1/ERK2 signaling cascade independently of RAF1 activation. Required for insulin-dependent activation of AKT3, but may function as an adapter rather than a direct activator. Upon insulin treatment may act as a downstream effector of PI3K and contribute to the activation of translocation of the glucose transporter SLC2A4/GLUT4 and subsequent glucose transport in adipocytes. In EGF-induced cells, binds and activates MAP2K5/MEK5-MAPK7/ERK5 independently of its kinase activity and can activate JUN promoter through MEF2C. Through binding with SQSTM1/p62, functions in interleukin-1 signaling and activation of NF-kappa-B with the specific adapters RIPK1 and TRAF6. Participates in TNF-dependent transactivation of NF-kappa-B by phosphorylating and activating IKBKB kinase, which in turn leads to the degradation of NF-kappa-B inhibitors. In migrating astrocytes, forms a cytoplasmic complex with PARD6A and is recruited by CDC42 to function in the establishment of cell polarity along with the microtubule motor and dynein. In association with FEZ1, stimulates neuronal differentiation in PC12 cells. In the inflammatory response, is required for the T-helper 2 (Th2) differentiation process, including interleukin production, efficient activation of JAK1 and the subsequent phosphorylation and nuclear translocation of STAT6. May be involved in development of allergic airway inflammation (asthma), a process dependent on Th2 immune response. In the NF-kappa-B-mediated inflammatory response, can relieve SETD6-dependent repression of NF-kappa-B target genes by phosphorylating the RELA subunit at 'Ser-311'. Phosphorylates VAMP2 in vitro. Phosphorylates and activates LRRK1, which phosphorylates RAB proteins involved in intracellular trafficking. This Oryctolagus cuniculus (Rabbit) protein is Protein kinase C zeta type (PRKCZ).